Reading from the N-terminus, the 55-residue chain is Large ribosomal subunit protein bL33 (55 aa).

It belongs to the bacterial ribosomal protein bL33 family.

The sequence is that of Large ribosomal subunit protein bL33 from Allorhizobium ampelinum (strain ATCC BAA-846 / DSM 112012 / S4) (Agrobacterium vitis (strain S4)).